Consider the following 157-residue polypeptide: Endoribonuclease YbeY (157 aa).

Residues H118, H122, and H128 each coordinate Zn(2+).

It belongs to the endoribonuclease YbeY family. Zn(2+) is required as a cofactor.

Its subcellular location is the cytoplasm. Its function is as follows. Single strand-specific metallo-endoribonuclease involved in late-stage 70S ribosome quality control and in maturation of the 3' terminus of the 16S rRNA. The polypeptide is Endoribonuclease YbeY (Shewanella loihica (strain ATCC BAA-1088 / PV-4)).